We begin with the raw amino-acid sequence, 147 residues long: Hemoglobin subunit epsilon (147 aa).

Residues His-3–His-147 enclose the Globin domain. Residues Ser-14 and Ser-51 each carry the phosphoserine modification. His-64 and His-93 together coordinate heme b.

The protein belongs to the globin family. In terms of assembly, heterotetramer of two alpha chains and two epsilon chains in early embryonic hemoglobin Gower-2; two zeta chains and two epsilon chains in early embryonic hemoglobin Gower-1. As to expression, red blood cells.

Its function is as follows. The epsilon chain is a beta-type chain of early mammalian embryonic hemoglobin. The chain is Hemoglobin subunit epsilon (HBE1) from Eulemur fulvus fulvus (Brown lemur).